Consider the following 938-residue polypeptide: Isoleucine--tRNA ligase (938 aa).

The 'HIGH' region signature appears at 58 to 68 (PYANGSIHIGH). Lys183 carries the N6-acetyllysine modification. Glu561 serves as a coordination point for L-isoleucyl-5'-AMP. A 'KMSKS' region motif is present at residues 602 to 606 (KMSKS). Lys605 provides a ligand contact to ATP. 4 residues coordinate Zn(2+): Cys901, Cys904, Cys921, and Cys924.

Belongs to the class-I aminoacyl-tRNA synthetase family. IleS type 1 subfamily. In terms of assembly, monomer. It depends on Zn(2+) as a cofactor.

It localises to the cytoplasm. It catalyses the reaction tRNA(Ile) + L-isoleucine + ATP = L-isoleucyl-tRNA(Ile) + AMP + diphosphate. Catalyzes the attachment of isoleucine to tRNA(Ile). As IleRS can inadvertently accommodate and process structurally similar amino acids such as valine, to avoid such errors it has two additional distinct tRNA(Ile)-dependent editing activities. One activity is designated as 'pretransfer' editing and involves the hydrolysis of activated Val-AMP. The other activity is designated 'posttransfer' editing and involves deacylation of mischarged Val-tRNA(Ile). This chain is Isoleucine--tRNA ligase, found in Escherichia coli O17:K52:H18 (strain UMN026 / ExPEC).